A 143-amino-acid chain; its full sequence is Large ribosomal subunit protein uL11 (143 aa).

This sequence belongs to the universal ribosomal protein uL11 family. In terms of assembly, part of the ribosomal stalk of the 50S ribosomal subunit. Interacts with L10 and the large rRNA to form the base of the stalk. L10 forms an elongated spine to which L12 dimers bind in a sequential fashion forming a multimeric L10(L12)X complex. Post-translationally, one or more lysine residues are methylated.

Its function is as follows. Forms part of the ribosomal stalk which helps the ribosome interact with GTP-bound translation factors. This chain is Large ribosomal subunit protein uL11, found in Sphingopyxis alaskensis (strain DSM 13593 / LMG 18877 / RB2256) (Sphingomonas alaskensis).